The primary structure comprises 437 residues: Methylenetetrahydrofolate--tRNA-(uracil-5-)-methyltransferase TrmFO (437 aa).

10 to 15 (GGGLAG) is an FAD binding site.

Belongs to the MnmG family. TrmFO subfamily. It depends on FAD as a cofactor.

It is found in the cytoplasm. The catalysed reaction is uridine(54) in tRNA + (6R)-5,10-methylene-5,6,7,8-tetrahydrofolate + NADH + H(+) = 5-methyluridine(54) in tRNA + (6S)-5,6,7,8-tetrahydrofolate + NAD(+). The enzyme catalyses uridine(54) in tRNA + (6R)-5,10-methylene-5,6,7,8-tetrahydrofolate + NADPH + H(+) = 5-methyluridine(54) in tRNA + (6S)-5,6,7,8-tetrahydrofolate + NADP(+). In terms of biological role, catalyzes the folate-dependent formation of 5-methyl-uridine at position 54 (M-5-U54) in all tRNAs. The sequence is that of Methylenetetrahydrofolate--tRNA-(uracil-5-)-methyltransferase TrmFO from Geotalea daltonii (strain DSM 22248 / JCM 15807 / FRC-32) (Geobacter daltonii).